A 483-amino-acid chain; its full sequence is Glutamyl-tRNA(Gln) amidotransferase subunit A (483 aa).

Active-site charge relay system residues include Lys76 and Ser151. The active-site Acyl-ester intermediate is Ser175.

This sequence belongs to the amidase family. GatA subfamily. In terms of assembly, heterotrimer of A, B and C subunits.

It carries out the reaction L-glutamyl-tRNA(Gln) + L-glutamine + ATP + H2O = L-glutaminyl-tRNA(Gln) + L-glutamate + ADP + phosphate + H(+). Functionally, allows the formation of correctly charged Gln-tRNA(Gln) through the transamidation of misacylated Glu-tRNA(Gln) in organisms which lack glutaminyl-tRNA synthetase. The reaction takes place in the presence of glutamine and ATP through an activated gamma-phospho-Glu-tRNA(Gln). This chain is Glutamyl-tRNA(Gln) amidotransferase subunit A, found in Pseudomonas putida (strain ATCC 47054 / DSM 6125 / CFBP 8728 / NCIMB 11950 / KT2440).